A 429-amino-acid polypeptide reads, in one-letter code: Adenylosuccinate synthetase (429 aa).

GTP contacts are provided by residues 12–18 (GDEGKGK) and 40–42 (GHT). Residue Asp13 is the Proton acceptor of the active site. Mg(2+) contacts are provided by Asp13 and Gly40. IMP-binding positions include 13–16 (DEGK), 38–41 (NAGH), Thr129, Arg143, Gln223, Thr238, and Arg302. His41 acts as the Proton donor in catalysis. Substrate is bound at residue 298–304 (VVTGRKR). Residues Arg304, 330–332 (KLD), and 412–414 (STS) contribute to the GTP site.

Belongs to the adenylosuccinate synthetase family. As to quaternary structure, homodimer. The cofactor is Mg(2+).

Its subcellular location is the cytoplasm. It carries out the reaction IMP + L-aspartate + GTP = N(6)-(1,2-dicarboxyethyl)-AMP + GDP + phosphate + 2 H(+). The protein operates within purine metabolism; AMP biosynthesis via de novo pathway; AMP from IMP: step 1/2. Plays an important role in the de novo pathway of purine nucleotide biosynthesis. Catalyzes the first committed step in the biosynthesis of AMP from IMP. In Bartonella bacilliformis (strain ATCC 35685 / KC583 / Herrer 020/F12,63), this protein is Adenylosuccinate synthetase.